A 362-amino-acid chain; its full sequence is GTPase Obg (362 aa).

The Obg domain maps to 1-159; that stretch reads MKFIDEARIE…RKLKLELKVL (159 aa). A disordered region spans residues 129–148; the sequence is HFKSSTNRAPRQKTNGKEGE. Residues 130 to 141 are compositionally biased toward polar residues; sequence FKSSTNRAPRQK. The OBG-type G domain occupies 160–334; it reads ADVGLLGMPN…LCYALQDYLD (175 aa). GTP is bound by residues 166 to 173, 191 to 195, 213 to 216, 284 to 287, and 315 to 317; these read GMPNAGKS, FTTLH, DIPG, NKVD, and SAL. Mg(2+)-binding residues include serine 173 and threonine 193. Positions 340-362 are disordered; it reads RDDAEERAADPRYQDQAADKSPD.

This sequence belongs to the TRAFAC class OBG-HflX-like GTPase superfamily. OBG GTPase family. As to quaternary structure, monomer. The cofactor is Mg(2+).

It localises to the cytoplasm. Functionally, an essential GTPase which binds GTP, GDP and possibly (p)ppGpp with moderate affinity, with high nucleotide exchange rates and a fairly low GTP hydrolysis rate. Plays a role in control of the cell cycle, stress response, ribosome biogenesis and in those bacteria that undergo differentiation, in morphogenesis control. The sequence is that of GTPase Obg from Polynucleobacter asymbioticus (strain DSM 18221 / CIP 109841 / QLW-P1DMWA-1) (Polynucleobacter necessarius subsp. asymbioticus).